Here is a 321-residue protein sequence, read N- to C-terminus: Protease HtpX homolog (321 aa).

The next 2 helical transmembrane spans lie at Thr6–Gly26 and Gly28–Ser48. His130 is a Zn(2+) binding site. The active site involves Glu131. A Zn(2+)-binding site is contributed by His134. 2 helical membrane-spanning segments follow: residues Ile145–Gly165 and Pro173–Val193. A Zn(2+)-binding site is contributed by Glu202. The tract at residues Glu281 to Ser321 is disordered. A compositionally biased stretch (basic and acidic residues) spans Arg310–Ser321.

This sequence belongs to the peptidase M48B family. Zn(2+) serves as cofactor.

It localises to the cell inner membrane. The chain is Protease HtpX homolog from Agrobacterium fabrum (strain C58 / ATCC 33970) (Agrobacterium tumefaciens (strain C58)).